An 88-amino-acid chain; its full sequence is UPF0250 protein Sbal_3280 (88 aa).

This sequence belongs to the UPF0250 family.

The polypeptide is UPF0250 protein Sbal_3280 (Shewanella baltica (strain OS155 / ATCC BAA-1091)).